The primary structure comprises 1726 residues: Protein Shroom2 (1726 aa).

Residues 79-159 enclose the PDZ domain; it reads AGGCYSYWRG…ILKMIVKRRN (81 aa). Disordered regions lie at residues 294-373, 425-451, 657-676, and 697-785; these read DNTK…RSDS, RTVA…LSPY, FSQL…DYSW, and EGRN…STYR. Residues 318-328 show a composition bias toward polar residues; the sequence is VLQSTSINETS. A compositionally biased stretch (basic and acidic residues) spans 329–338; sequence KIQRTEDNTE. Residues 657 to 667 are compositionally biased toward basic and acidic residues; it reads FSQLDHSEKGS. Composition is skewed to polar residues over residues 746 to 755 and 769 to 785; these read SKSTAALTES and LESM…STYR. The region spanning 788–877 is the ASD1 domain; that stretch reads LQEAQARVLR…SEPEKINEVG (90 aa). 6 disordered regions span residues 913–968, 1007–1080, 1092–1120, 1166–1240, 1269–1299, and 1471–1499; these read PKVP…DKVT, LDAD…QCGA, KWKP…GTLP, FKKR…KNPS, SSKS…DKPP, and AQQR…VPSA. A compositionally biased stretch (low complexity) spans 917 to 926; sequence PKVVSSSQSE. Basic and acidic residues predominate over residues 936–948; that stretch reads DYAKSSEGQESKR. Polar residues-rich tracts occupy residues 1054-1070 and 1104-1119; these read NSNS…SPTR and ETSN…SGTL. The segment covering 1191–1205 has biased composition (low complexity); that stretch reads SSSSLATSSESLLTA. Positions 1209–1235 are enriched in polar residues; that stretch reads RAQSYSPSSQDTFPPQSLQKQSPSTYP. An ASD2 domain is found at 1427 to 1721; that stretch reads EELVREIVDK…QLKCLTDSLP (295 aa).

This sequence belongs to the shroom family. Interacts with F-actin.

It is found in the apical cell membrane. Its subcellular location is the cell junction. The protein resides in the tight junction. It localises to the cytoplasm. The protein localises to the cytoskeleton. Its function is as follows. May be involved in endothelial cell morphology changes during cell spreading. Required for eye pigmentation. In the retinal pigment epithelium, regulates the biogenesis of melanosomes and promotes their association with the apical cell surface by inducing gamma-tubulin redistribution. The sequence is that of Protein Shroom2 (shroom2) from Xenopus tropicalis (Western clawed frog).